The following is a 434-amino-acid chain: Nicotinate phosphoribosyltransferase (434 aa).

His-242 is modified (phosphohistidine; by autocatalysis).

The protein belongs to the NAPRTase family. Transiently phosphorylated on a His residue during the reaction cycle. Phosphorylation strongly increases the affinity for substrates and increases the rate of nicotinate D-ribonucleotide production. Dephosphorylation regenerates the low-affinity form of the enzyme, leading to product release.

The catalysed reaction is nicotinate + 5-phospho-alpha-D-ribose 1-diphosphate + ATP + H2O = nicotinate beta-D-ribonucleotide + ADP + phosphate + diphosphate. It functions in the pathway cofactor biosynthesis; NAD(+) biosynthesis; nicotinate D-ribonucleotide from nicotinate: step 1/1. Its function is as follows. Catalyzes the synthesis of beta-nicotinate D-ribonucleotide from nicotinate and 5-phospho-D-ribose 1-phosphate at the expense of ATP. The protein is Nicotinate phosphoribosyltransferase of Brucella canis (strain ATCC 23365 / NCTC 10854 / RM-666).